Here is a 70-residue protein sequence, read N- to C-terminus: uncharacterized protein (70 aa).

This is an uncharacterized protein from Enterobacteria phage T4 (Bacteriophage T4).